A 656-amino-acid chain; its full sequence is Vacuolar amino acid transporter 3 (656 aa).

Positions 1–109 (MSNSQSIKIK…VPSTSEDPDV (109 aa)) are disordered. Polar residues predominate over residues 15-28 (NENFASGSYSSRRS). S37 and S53 each carry phosphoserine. A compositionally biased stretch (polar residues) spans 50-71 (ISPSESNLPNNVAENTTDTPVN). Over residues 75–97 (IRDENHNSRKGKDVTLNSDEAHS) the composition is skewed to basic and acidic residues. At S172 the chain carries Phosphoserine. A run of 11 helical transmembrane segments spans residues 280–300 (AVLLLLKSFVGTGVLFLPKAF), 307–327 (FSSATLLIVGVLSHICFLLLI), 351–371 (FAILASIVVSQIGFSSAYISF), 389–409 (EYHLAVFIFIQFLVFVPLSLV), 419–439 (ALIADVFILLGILYLYFWDVI), 457–477 (FSLFIGVAIFTYEGICLILPI), 494–514 (VMAAISLLFISIGLLSYAAFG), 537–557 (LYAIAILLSTPLQLFPAIAII), 578–598 (YLRVLIVILAILISWAGSSRL), 601–621 (FVSMVGSVCCIPLIYMYPPML), and 636–656 (DIFMFTIGAFAMAFTTYMTFF).

It belongs to the amino acid/polyamine transporter 2 family.

It is found in the endoplasmic reticulum membrane. The protein localises to the vacuole membrane. Its function is as follows. Involved in amino acid efflux from the vacuole to the cytoplasm. Capable of transporting large neutral amino acids including tyrosine, glutamine, asparagine, isoleucine and leucine. Required for spore formation. In Schizosaccharomyces pombe (strain 972 / ATCC 24843) (Fission yeast), this protein is Vacuolar amino acid transporter 3 (avt3).